Consider the following 102-residue polypeptide: Beta-defensin 116 (102 aa).

A signal peptide spans 1 to 23 (MSVMKPCLMTIAILMILAQKTPG). 3 disulfides stabilise this stretch: Cys-40–Cys-67, Cys-47–Cys-61, and Cys-51–Cys-68. Residues 83–102 (EDYDSNSNLSVTNSSSYSHI) form a disordered region. Residues 87–102 (SNSNLSVTNSSSYSHI) are compositionally biased toward low complexity.

This sequence belongs to the beta-defensin family.

It is found in the secreted. Its function is as follows. Has antibacterial activity. The sequence is that of Beta-defensin 116 (DEFB116) from Homo sapiens (Human).